The primary structure comprises 140 residues: Truncated tyrosine phosphatase D1 (140 aa).

Positions 1-140 constitute a Tyrosine-protein phosphatase domain; it reads MRRPNCIAEI…SAQWIQFLKK (140 aa).

The protein belongs to the protein-tyrosine phosphatase family.

The sequence is that of Truncated tyrosine phosphatase D1 (D1) from Microplitis demolitor bracovirus (isolate Webb) (MdBV).